The primary structure comprises 184 residues: Acetyl-CoA decarbonylase/synthase complex subunit epsilon 1 (184 aa).

The protein belongs to the CdhB family. In terms of assembly, heterotetramer of two alpha and two epsilon subunits. The ACDS complex is made up of alpha, epsilon, beta, gamma and delta subunits with a probable stoichiometry of (alpha(2)epsilon(2))(4)-beta(8)-(gamma(1)delta(1))(8).

Functionally, part of a complex that catalyzes the reversible cleavage of acetyl-CoA, allowing autotrophic growth from CO(2). The alpha-epsilon subcomponent functions as a carbon monoxide dehydrogenase. The precise role of the epsilon subunit is unclear; it may have a stabilizing role within the alpha(2)epsilon(2) component and/or be involved in electron transfer to FAD during a potential FAD-mediated CO oxidation. The sequence is that of Acetyl-CoA decarbonylase/synthase complex subunit epsilon 1 (cdhB1) from Archaeoglobus fulgidus (strain ATCC 49558 / DSM 4304 / JCM 9628 / NBRC 100126 / VC-16).